The chain runs to 99 residues: Keratinocyte differentiation-associated protein (99 aa).

The signal sequence occupies residues 1 to 22 (MKIPVLPAVVLLSLLALHSAQG).

As to expression, highly expressed in skin, but not detectable in any other tissue examined. Expression restricted to cornified/stratified epithelia and not detected in non-cornified/stratified epithelia.

The protein localises to the secreted. Its function is as follows. May act as a soluble regulator of keratinocyte differentiation. May play an important role in embryonic skin morphogenesis. This Canis lupus familiaris (Dog) protein is Keratinocyte differentiation-associated protein.